The following is a 669-amino-acid chain: Probable serine/threonine-protein kinase DDB_G0291918 (669 aa).

One can recognise a Protein kinase domain in the interval 13-360 (YNNIKELGRG…LKETLNHPFL (348 aa)). ATP-binding positions include 19–27 (LGRGVSGVV) and Lys42. The active-site Proton acceptor is the Asp141. Residues 396 to 405 (QNQQQQQQQQ) show a composition bias toward low complexity. 2 disordered regions span residues 396–518 (QNQQ…APTF) and 530–550 (FPKL…MNWR). Over residues 406 to 418 (KSFSTSSLPQVNH) the composition is skewed to polar residues. 2 stretches are compositionally biased toward low complexity: residues 419–449 (NNDT…NNNN) and 457–494 (QSNN…SSTD).

It belongs to the protein kinase superfamily. Ser/Thr protein kinase family.

It catalyses the reaction L-seryl-[protein] + ATP = O-phospho-L-seryl-[protein] + ADP + H(+). The enzyme catalyses L-threonyl-[protein] + ATP = O-phospho-L-threonyl-[protein] + ADP + H(+). This Dictyostelium discoideum (Social amoeba) protein is Probable serine/threonine-protein kinase DDB_G0291918.